Reading from the N-terminus, the 134-residue chain is L-ectoine synthase (134 aa).

This sequence belongs to the ectoine synthase family.

It catalyses the reaction (2S)-4-acetamido-2-aminobutanoate = L-ectoine + H2O. It participates in amine and polyamine biosynthesis; ectoine biosynthesis; L-ectoine from L-aspartate 4-semialdehyde: step 3/3. Its function is as follows. Catalyzes the circularization of gamma-N-acetyl-alpha,gamma-diaminobutyric acid (ADABA) to ectoine (1,4,5,6-tetrahydro-2-methyl-4-pyrimidine carboxylic acid), which is an excellent osmoprotectant. The polypeptide is L-ectoine synthase (Thermobifida fusca (strain YX)).